We begin with the raw amino-acid sequence, 410 residues long: Ribonucleoside-diphosphate reductase small chain (410 aa).

Residues 1 to 20 (MSVQTSPSKQVTSGIQNLNM) are compositionally biased toward polar residues. Disordered regions lie at residues 1–43 (MSVQ…DEDL) and 55–78 (NANK…ANEP). Basic and acidic residues-rich tracts occupy residues 23–43 (PAKK…DEDL) and 55–65 (NANKKAAEAKK). Asp146, Glu177, and His180 together coordinate Fe cation. Residue Tyr184 is part of the active site. Fe cation is bound by residues Glu240, Glu274, and His277.

The protein belongs to the ribonucleoside diphosphate reductase small chain family. Heterodimer of a large and a small subunit. It depends on Fe cation as a cofactor.

It carries out the reaction a 2'-deoxyribonucleoside 5'-diphosphate + [thioredoxin]-disulfide + H2O = a ribonucleoside 5'-diphosphate + [thioredoxin]-dithiol. Functionally, provides the precursors necessary for DNA synthesis. Catalyzes the biosynthesis of deoxyribonucleotides from the corresponding ribonucleotides. The protein is Ribonucleoside-diphosphate reductase small chain (rnr-2) of Neurospora crassa (strain ATCC 24698 / 74-OR23-1A / CBS 708.71 / DSM 1257 / FGSC 987).